Here is a 298-residue protein sequence, read N- to C-terminus: Isochorismatase domain-containing protein 1 (298 aa).

Tyr160 carries the phosphotyrosine modification. Position 279 is an N6-succinyllysine (Lys279).

Belongs to the isochorismatase family.

This Homo sapiens (Human) protein is Isochorismatase domain-containing protein 1 (ISOC1).